Consider the following 544-residue polypeptide: Serine/threonine-protein kinase PAK 1 (544 aa).

Residues 1–79 are disordered; that stretch reads MSNNGLDVQD…KERPEISLPS (79 aa). Position 2 is an N-acetylserine (Ser-2). Ser-21 is subject to Phosphoserine; by PKB and autocatalysis. At Ser-57 the chain carries Phosphoserine; by autocatalysis. The segment covering 68-79 has biased composition (basic and acidic residues); the sequence is KEKERPEISLPS. Residues 70–140 are autoregulatory region; the sequence is KERPEISLPS…YNSKKTSNSQ (71 aa). Residues 75-88 enclose the CRIB domain; that stretch reads ISLPSDFEHTIHVG. The segment at 75-105 is GTPase-binding; that stretch reads ISLPSDFEHTIHVGFDAVTGEFTGMPEQWAR. Phosphothreonine; by OXSR1 is present on Thr-84. Ser-115 is subject to Phosphoserine. Tyr-131 and Tyr-142 each carry phosphotyrosine. Ser-144 and Ser-149 each carry phosphoserine; by autocatalysis. Residues 150–166 show a composition bias toward polar residues; the sequence is AEDYNSSNTLNVKTVSE. The segment at 150-195 is disordered; the sequence is AEDYNSSNTLNVKTVSETPAVPPVSEDEDDDDDATPPPVIAPRPEH. Tyr-153 carries the phosphotyrosine; by JAK2 modification. At Ser-174 the chain carries Phosphoserine. Acidic residues predominate over residues 174-183; it reads SEDEDDDDDA. Thr-184 is subject to Phosphothreonine. Ser-198 is modified (phosphoserine; by autocatalysis). Tyr-200 carries the phosphotyrosine; by JAK2 modification. Position 203 is a phosphoserine; by autocatalysis (Ser-203). The interval 209–250 is disordered; the sequence is PVTPTRDVATSPISPTENNTTPPDALTRNTEKQKKKPKMSDE. A phosphothreonine mark is found at Thr-211 and Thr-218. A phosphoserine mark is found at Ser-219 and Ser-222. Over residues 219-230 the composition is skewed to polar residues; that stretch reads SPISPTENNTTP. A phosphothreonine mark is found at Thr-224, Thr-228, and Thr-229. Residues 269-520 enclose the Protein kinase domain; that stretch reads YTRFEKIGQG…AKELLQHQFL (252 aa). 275-283 is a binding site for ATP; it reads IGQGASGTV. At Tyr-284 the chain carries Phosphotyrosine; by JAK2. Lys-298 lines the ATP pocket. Asp-388 serves as the catalytic Proton acceptor. Position 422 is a phosphothreonine; by autocatalysis, BRSK2 and PDPK1 (Thr-422).

The protein belongs to the protein kinase superfamily. STE Ser/Thr protein kinase family. STE20 subfamily. In terms of assembly, homodimer in its autoinhibited state. Active as monomer. Interacts with GIT1. Component of cytoplasmic complexes, which also contains PXN, ARHGEF7 and GIT1. Interacts with NISCH. Interacts with DVL1; mediates the formation of a DVL1, MUSK and PAK1 ternary complex involved in AChR clustering. Binds to the caspase-cleaved p110 isoform of CDC2L1 and CDC2L2, p110C, but not the full-length proteins. Interacts with ARHGEF7. Interacts with SCRIB. Interacts with PDPK1. Interacts (via kinase domain) with RAF1. Interacts with NCK1 and NCK2. Interacts with TBCB. Interacts with BRSK2. Interacts tightly with GTP-bound but not GDP-bound CDC42/P21 and RAC1. Interacts with SNAI1. Interacts with CIB1 (via N-terminal region); the interaction is direct, promotes PAK1 activity and occurs in a calcium-dependent manner. Interacts with INPP5K. Interacts with gamma-tubulin. Interacts with RHOU; the interaction promotes PAK1 activation. Mg(2+) serves as cofactor. In terms of processing, autophosphorylated in trans, meaning that in a dimer, one kinase molecule phosphorylates the other one. Activated by autophosphorylation at Thr-422 in response to a conformation change, triggered by interaction with GTP-bound CDC42 or RAC1. Activated by phosphorylation at Thr-422 by PDPK1. Phosphorylated by JAK2 in response to PRL; this increases PAK1 kinase activity. Phosphorylated at Ser-21 by PKB/AKT; this reduces interaction with NCK1 and association with focal adhesion sites. Activated by phosphorylation at Thr-422 by BRSK2. Upon DNA damage, phosphorylated at Thr-211 and translocates to the nucleoplasm. Phosphorylated at tyrosine residues, which can be enhanced by NTN1. In terms of tissue distribution, expressed predominantly in the brain, with higher expression in neuronal groups associated with motor function, and at lower levels in the spleen.

Its subcellular location is the cytoplasm. It localises to the cell junction. The protein resides in the focal adhesion. The protein localises to the cell projection. It is found in the lamellipodium. Its subcellular location is the cell membrane. It localises to the ruffle membrane. The protein resides in the invadopodium. The protein localises to the nucleus. It is found in the nucleoplasm. Its subcellular location is the chromosome. It localises to the cytoskeleton. The protein resides in the microtubule organizing center. The protein localises to the centrosome. It catalyses the reaction L-seryl-[protein] + ATP = O-phospho-L-seryl-[protein] + ADP + H(+). The catalysed reaction is L-threonyl-[protein] + ATP = O-phospho-L-threonyl-[protein] + ADP + H(+). With respect to regulation, phosphorylation of Thr-84 by OXSR1 inhibits activation. Activated by binding small G proteins. Binding of GTP-bound CDC42 or RAC1 to the autoregulatory region releases monomers from the autoinhibited dimer, and enables activation by phosphorylation of Thr-422. Functionally, protein kinase involved in intracellular signaling pathways downstream of integrins and receptor-type kinases that plays an important role in cytoskeleton dynamics, in cell adhesion, migration, proliferation, apoptosis, mitosis, and in vesicle-mediated transport processes. Can directly phosphorylate BAD and protects cells against apoptosis. Activated by interaction with CDC42 and RAC1. Functions as a GTPase effector that links the Rho-related GTPases CDC42 and RAC1 to the JNK MAP kinase pathway. Phosphorylates and activates MAP2K1, and thereby mediates activation of downstream MAP kinases. Involved in the reorganization of the actin cytoskeleton, actin stress fibers and of focal adhesion complexes. Phosphorylates the tubulin chaperone TBCB and thereby plays a role in the regulation of microtubule biogenesis and organization of the tubulin cytoskeleton. Plays a role in the regulation of insulin secretion in response to elevated glucose levels. Part of a ternary complex that contains PAK1, DVL1 and MUSK that is important for MUSK-dependent regulation of AChR clustering during the formation of the neuromuscular junction (NMJ). Activity is inhibited in cells undergoing apoptosis, potentially due to binding of CDC2L1 and CDC2L2. Phosphorylates MYL9/MLC2. Phosphorylates RAF1 at 'Ser-338' and 'Ser-339' resulting in: activation of RAF1, stimulation of RAF1 translocation to mitochondria, phosphorylation of BAD by RAF1, and RAF1 binding to BCL2. Phosphorylates SNAI1 at 'Ser-246' promoting its transcriptional repressor activity by increasing its accumulation in the nucleus. In podocytes, promotes NR3C2 nuclear localization. Required for atypical chemokine receptor ACKR2-induced phosphorylation of LIMK1 and cofilin (CFL1) and for the up-regulation of ACKR2 from endosomal compartment to cell membrane, increasing its efficiency in chemokine uptake and degradation. In synapses, seems to mediate the regulation of F-actin cluster formation performed by SHANK3, maybe through CFL1 phosphorylation and inactivation. Plays a role in RUFY3-mediated facilitating gastric cancer cells migration and invasion. In response to DNA damage, phosphorylates MORC2 which activates its ATPase activity and facilitates chromatin remodeling. In neurons, plays a crucial role in regulating GABA(A) receptor synaptic stability and hence GABAergic inhibitory synaptic transmission through its role in F-actin stabilization. In hippocampal neurons, necessary for the formation of dendritic spines and excitatory synapses; this function is dependent on kinase activity and may be exerted by the regulation of actomyosin contractility through the phosphorylation of myosin II regulatory light chain (MLC). Along with GIT1, positively regulates microtubule nucleation during interphase. Phosphorylates FXR1, promoting its localization to stress granules and activity. Phosphorylates ILK on 'Thr-173' and 'Ser-246', promoting nuclear export of ILK. This Rattus norvegicus (Rat) protein is Serine/threonine-protein kinase PAK 1.